Consider the following 737-residue polypeptide: Exostosin-1c (737 aa).

At 1–6 (MQARKK) the chain is on the cytoplasmic side. A helical; Signal-anchor for type II membrane protein transmembrane segment spans residues 7–27 (YVLLGLCTCCWILLYYWAGLQ). At 28-737 (ERLLGLITHR…RKRYKDLERV (710 aa)) the chain is on the lumenal side. Asn-194 and Asn-322 each carry an N-linked (GlcNAc...) asparagine glycan. Arg-432, Arg-540, Asp-556, Glu-557, Asp-558, Glu-644, Asp-645, and Arg-692 together coordinate UDP-N-acetyl-alpha-D-glucosamine. Position 558 (Asp-558) interacts with Mn(2+). Cys-643 and Cys-695 form a disulfide bridge. Asp-645 is a catalytic residue.

It belongs to the glycosyltransferase 47 family. It depends on Mn(2+) as a cofactor.

The protein localises to the endoplasmic reticulum membrane. The catalysed reaction is 3-O-{[(1-&gt;4)-beta-D-GlcA-(1-&gt;4)-alpha-D-GlcNAc](n)-(1-&gt;4)-beta-D-GlcA-(1-&gt;3)-beta-D-Gal-(1-&gt;3)-beta-D-Gal-(1-&gt;4)-beta-D-Xyl}-L-seryl-[protein] + UDP-N-acetyl-alpha-D-glucosamine = 3-O-{alpha-D-GlcNAc-[(1-&gt;4)-beta-D-GlcA-(1-&gt;4)-alpha-D-GlcNAc](n)-(1-&gt;4)-beta-D-GlcA-(1-&gt;3)-beta-D-Gal-(1-&gt;3)-beta-D-Gal-(1-&gt;4)-beta-D-Xyl}-L-seryl-[protein] + UDP + H(+). It catalyses the reaction 3-O-{alpha-D-GlcNAc-[(1-&gt;4)-beta-D-GlcA-(1-&gt;4)-alpha-D-GlcNAc](n)-(1-&gt;4)-beta-D-GlcA-(1-&gt;3)-beta-D-Gal-(1-&gt;3)-beta-D-Gal-(1-&gt;4)-beta-D-Xyl}-L-seryl-[protein] + UDP-alpha-D-glucuronate = 3-O-{[(1-&gt;4)-beta-D-GlcA-(1-&gt;4)-alpha-D-GlcNAc](n+1)-(1-&gt;4)-beta-D-GlcA-(1-&gt;3)-beta-D-Gal-(1-&gt;3)-beta-D-Gal-(1-&gt;4)-beta-D-Xyl}-L-seryl-[protein] + UDP + H(+). Its pathway is protein modification; protein glycosylation. Its function is as follows. Glycosyltransferase required for the biosynthesis of heparan-sulfate. This is Exostosin-1c (ext1c) from Danio rerio (Zebrafish).